The sequence spans 190 residues: NADH-ubiquinone oxidoreductase 75 kDa subunit, mitochondrial (190 aa).

It belongs to the complex I 75 kDa subunit family. As to quaternary structure, core subunit of respiratory chain NADH dehydrogenase (Complex I) which is composed of 45 different subunits. This is the largest subunit of complex I and it is a component of the iron-sulfur (IP) fragment of the enzyme. Complex I associates with ubiquinol-cytochrome reductase complex (Complex III) to form supercomplexes. Interacts with MDM2 and AKAP1. It depends on [2Fe-2S] cluster as a cofactor. [4Fe-4S] cluster serves as cofactor.

The protein resides in the mitochondrion inner membrane. It carries out the reaction a ubiquinone + NADH + 5 H(+)(in) = a ubiquinol + NAD(+) + 4 H(+)(out). Core subunit of the mitochondrial membrane respiratory chain NADH dehydrogenase (Complex I) which catalyzes electron transfer from NADH through the respiratory chain, using ubiquinone as an electron acceptor. Essential for catalysing the entry and efficient transfer of electrons within complex I. Plays a key role in the assembly and stability of complex I and participates in the association of complex I with ubiquinol-cytochrome reductase complex (Complex III) to form supercomplexes. In Mesocricetus auratus (Golden hamster), this protein is NADH-ubiquinone oxidoreductase 75 kDa subunit, mitochondrial.